A 366-amino-acid polypeptide reads, in one-letter code: Ribosomal RNA large subunit methyltransferase M (366 aa).

S-adenosyl-L-methionine-binding positions include Ser188, 221 to 224 (CPGG), Asp240, Asp260, and Asp277. Lys306 functions as the Proton acceptor in the catalytic mechanism.

Belongs to the class I-like SAM-binding methyltransferase superfamily. RNA methyltransferase RlmE family. RlmM subfamily. As to quaternary structure, monomer.

The protein localises to the cytoplasm. The enzyme catalyses cytidine(2498) in 23S rRNA + S-adenosyl-L-methionine = 2'-O-methylcytidine(2498) in 23S rRNA + S-adenosyl-L-homocysteine + H(+). Its function is as follows. Catalyzes the 2'-O-methylation at nucleotide C2498 in 23S rRNA. The polypeptide is Ribosomal RNA large subunit methyltransferase M (Shigella flexneri serotype 5b (strain 8401)).